A 913-amino-acid chain; its full sequence is Epithelial discoidin domain-containing receptor 1 (913 aa).

Positions 1–18 are cleaved as a signal peptide; that stretch reads MGPEALSSLLLLLLVASG. Topologically, residues 21–417 are extracellular; that stretch reads DMKGHFDPAK…VAKAEGSPTA (397 aa). One can recognise an F5/8 type C domain in the interval 31-185; sequence CRYALGMQDR…VCLRVELYGC (155 aa). Disulfide bonds link Cys-31/Cys-185 and Cys-74/Cys-177. Positions 192 to 367 are DS-like domain; sequence LSYTAPVGQT…LFSEISFISD (176 aa). Ca(2+) contacts are provided by Asn-211, Gln-230, Asp-233, Val-235, Tyr-253, and Tyr-255. A glycan (N-linked (GlcNAc...) asparagine) is linked at Asn-211. Asn-260 is a glycosylation site (N-linked (GlcNAc...) asparagine). The cysteines at positions 303 and 348 are disulfide-linked. Ca(2+) is bound by residues Ser-360 and Glu-361. Asn-370 and Asn-394 each carry an N-linked (GlcNAc...) asparagine glycan. A helical transmembrane segment spans residues 418 to 438; that stretch reads ILIGCLVAIILLLLLIIALML. At 439 to 913 the chain is on the cytoplasmic side; that stretch reads WRLHWRRLLS…FLAEDALNTV (475 aa). A disordered region spans residues 470-499; sequence ILINNRPGPREPPPYQEPRPRGNPPHSAPC. The segment covering 479–496 has biased composition (pro residues); sequence REPPPYQEPRPRGNPPHS. The PPxY motif signature appears at 481–484; that stretch reads PPPY. Phosphotyrosine; by autocatalysis occurs at positions 484, 513, and 520. The Protein kinase domain maps to 610 to 905; the sequence is LRFKEKLGEG…PPFSQLHRFL (296 aa). 616–624 contributes to the ATP binding site; sequence LGEGQFGEV. Ser-631 is subject to Phosphoserine. Lys-655 is a binding site for ATP. Residue Tyr-740 is modified to Phosphotyrosine; by autocatalysis. Asp-766 functions as the Proton acceptor in the catalytic mechanism. Phosphotyrosine; by autocatalysis is present on residues Tyr-792, Tyr-796, and Tyr-797.

The protein belongs to the protein kinase superfamily. Tyr protein kinase family. Insulin receptor subfamily. As to quaternary structure, homodimer. Interacts (via PPxY motif) with WWC1 (via WW domains) in a collagen-regulated manner. Forms a tripartite complex with WWC1 and PRKCZ, but predominantly in the absence of collagen. Interacts (tyrosine phosphorylated) with SHC1. Interacts with SRC. Interacts with MYH9. Interacts with CDH1. Interacts with PTPN11. Interacts with NCK2. Autophosphorylated in response to fibrillar collagen binding. Post-translationally, glycosylation of Asn-211, but apparently not of Asn-260 or Asn-394, prevents autophosphorylation from occurring in the absence of collagen. Detected in T-47D, MDA-MB-175 and HBL-100 breast carcinoma cells, A-431 epidermoid carcinoma cells, SW48 and SNU-C2B colon carcinoma cells and Hs 294T melanoma cells (at protein level). Expressed at low levels in most adult tissues and is highest in the brain, lung, placenta and kidney. Lower levels of expression are detected in melanocytes, heart, liver, skeletal muscle and pancreas. Abundant in breast carcinoma cell lines. In the colonic mucosa, expressed in epithelia but not in the connective tissue of the lamina propria. In the thyroid gland, expressed in the epithelium of the thyroid follicles. In pancreas, expressed in the islets of Langerhans cells, but not in the surrounding epithelial cells of the exocrine pancreas. In kidney, expressed in the epithelia of the distal tubules. Not expressed in connective tissue, endothelial cells, adipose tissue, muscle cells or cells of hematopoietic origin.

The protein localises to the cell membrane. The protein resides in the secreted. The catalysed reaction is L-tyrosyl-[protein] + ATP = O-phospho-L-tyrosyl-[protein] + ADP + H(+). Inhibited by the multi-targeted cancer drugs imatinib and ponatinib. Tyrosine kinase that functions as a cell surface receptor for fibrillar collagen and regulates cell attachment to the extracellular matrix, remodeling of the extracellular matrix, cell migration, differentiation, survival and cell proliferation. Collagen binding triggers a signaling pathway that involves SRC and leads to the activation of MAP kinases. Regulates remodeling of the extracellular matrix by up-regulation of the matrix metalloproteinases MMP2, MMP7 and MMP9, and thereby facilitates cell migration and wound healing. Required for normal blastocyst implantation during pregnancy, for normal mammary gland differentiation and normal lactation. Required for normal ear morphology and normal hearing. Promotes smooth muscle cell migration, and thereby contributes to arterial wound healing. Also plays a role in tumor cell invasion. Phosphorylates PTPN11. This chain is Epithelial discoidin domain-containing receptor 1 (DDR1), found in Homo sapiens (Human).